Reading from the N-terminus, the 474-residue chain is Cbb3-type cytochrome c oxidase subunit CcoN1 (474 aa).

The Cytoplasmic segment spans residues Met-1–Gln-16. The chain crosses the membrane as a helical span at residues Phe-17–Ala-37. Residues Gln-38 to His-60 are Periplasmic-facing. His-60 serves as a coordination point for heme b. A helical transmembrane segment spans residues Thr-61–Val-81. Topologically, residues Gln-82 to Ala-96 are cytoplasmic. A helical transmembrane segment spans residues Phe-97–Phe-117. Over Thr-118–Pro-129 the chain is Periplasmic. Residues Ile-130–Ala-150 form a helical membrane-spanning segment. Residues Lys-151–His-156 are Cytoplasmic-facing. The helical transmembrane segment at Ile-157–Val-177 threads the bilayer. The Periplasmic segment spans residues Asn-178–Tyr-205. Residues Gly-206–Val-226 traverse the membrane as a helical segment. His-207 lines the Cu cation pocket. Residues Pro-227–Arg-238 are Cytoplasmic-facing. Residues Leu-239 to Leu-259 form a helical membrane-spanning segment. Cu cation-binding residues include His-257 and His-258. Residues His-260–Ser-270 are Periplasmic-facing. The chain crosses the membrane as a helical span at residues Leu-271–Met-291. Residues Met-292–Arg-308 lie on the Cytoplasmic side of the membrane. The helical transmembrane segment at Phe-309–Ile-329 threads the bilayer. Residues Lys-330–His-345 are Periplasmic-facing. Heme b is bound by residues His-345 and His-347. The helical transmembrane segment at Val-346–Val-366 threads the bilayer. The Cytoplasmic segment spans residues Pro-367 to His-384. Residues Phe-385 to Ala-405 form a helical membrane-spanning segment. Residues Gln-406–Pro-432 are Periplasmic-facing. Residues Gly-433–Tyr-453 traverse the membrane as a helical segment. Residues Asn-454–Ala-474 lie on the Cytoplasmic side of the membrane.

The protein belongs to the heme-copper respiratory oxidase family. Component of the cbb3-type cytochrome c oxidase at least composed of CcoN, CcoO, CcoQ and CcoP. It depends on Cu(2+) as a cofactor. The cofactor is heme b.

The protein localises to the cell inner membrane. It carries out the reaction 4 Fe(II)-[cytochrome c] + O2 + 8 H(+)(in) = 4 Fe(III)-[cytochrome c] + 2 H2O + 4 H(+)(out). It participates in energy metabolism; oxidative phosphorylation. In terms of biological role, cbb3-type cytochrome c oxidase is the component of the respiratory chain that catalyzes the reduction of oxygen to water. Subunits CcoN and CcoO form the functional core of the enzyme complex. Subunits CcoP and CcoQ may optionally bind to the core. CcoN is the catalytic subunit of the enzyme. Electrons originating in cytochrome c or a quinol are transferred to the bimetallic center formed by a high-spin heme and copper B. The complex also functions as a proton pump. This Stutzerimonas stutzeri (Pseudomonas stutzeri) protein is Cbb3-type cytochrome c oxidase subunit CcoN1.